Consider the following 354-residue polypeptide: Uroporphyrinogen decarboxylase (354 aa).

Substrate is bound by residues 28–32 (RQAGR), D78, Y155, S210, and H325.

This sequence belongs to the uroporphyrinogen decarboxylase family. In terms of assembly, homodimer.

Its subcellular location is the cytoplasm. The enzyme catalyses uroporphyrinogen III + 4 H(+) = coproporphyrinogen III + 4 CO2. Its pathway is porphyrin-containing compound metabolism; protoporphyrin-IX biosynthesis; coproporphyrinogen-III from 5-aminolevulinate: step 4/4. Its function is as follows. Catalyzes the decarboxylation of four acetate groups of uroporphyrinogen-III to yield coproporphyrinogen-III. The polypeptide is Uroporphyrinogen decarboxylase (Crocosphaera subtropica (strain ATCC 51142 / BH68) (Cyanothece sp. (strain ATCC 51142))).